The chain runs to 347 residues: Ribosomal RNA small subunit methyltransferase H (347 aa).

S-adenosyl-L-methionine contacts are provided by residues 47 to 49, Asp64, Phe91, Asp114, and Gln121; that span reads GGY. Positions 291 to 347 are disordered; sequence PAVKGAVGPTAEEEERNPRARSAKLRAGIRTENPPLEDDLSLFGLPKLPETNELARS.

Belongs to the methyltransferase superfamily. RsmH family.

It localises to the cytoplasm. The catalysed reaction is cytidine(1402) in 16S rRNA + S-adenosyl-L-methionine = N(4)-methylcytidine(1402) in 16S rRNA + S-adenosyl-L-homocysteine + H(+). Specifically methylates the N4 position of cytidine in position 1402 (C1402) of 16S rRNA. The chain is Ribosomal RNA small subunit methyltransferase H from Brucella anthropi (strain ATCC 49188 / DSM 6882 / CCUG 24695 / JCM 21032 / LMG 3331 / NBRC 15819 / NCTC 12168 / Alc 37) (Ochrobactrum anthropi).